Consider the following 56-residue polypeptide: Alpha-pompilidotoxin (56 aa).

The first 22 residues, M1–A22, serve as a signal peptide directing secretion. The propeptide occupies E23–P42. A Leucine amide modification is found at L55.

In terms of tissue distribution, expressed by the venom gland.

It localises to the secreted. Inhibits sodium channels (Nav) inactivation. Shows two types of inhibitory activities on channels. Inhibition of hNav1.6/SCN8A shows a large increase in the steady-state current component without any increase in the slow component, whereas inhibition of hNav1.1/SCN1A, hNav1.2/SCN2A, hNav1.3/SCN3A and hNav1.7/SCN9A shows a large increase in the slow component with only a small steady-state component. Is 5-fold less potent than beta-PMTX for inducing repetitive action potentials in lobster neuromuscular junctions. The chain is Alpha-pompilidotoxin from Anoplius samariensis (Solitary wasp).